We begin with the raw amino-acid sequence, 266 residues long: MSHITKIKNWNTNLRKNMENIVNRTYTRIGQLLKQDISQGIYSIGDKLPTEREISEKFGVSRTIVREAMVMLEVEKLVEVKKGSGVYVVRTPESIHMEHSDLPDVGPFELLQARQLLESSIAEFAALQATKKDILNLKQILNREKELLTQNQDDYSADKDFHLALAEITQNDVLVKLQEQLWQYRFNSAMWAQLHSRILQNDYHHLWIEDHQTILSAIQKKNANEARKAMWQHLENVKVKLFELSDVEDPHFDGYLFNTNPVVVGI.

In terms of domain architecture, HTH gntR-type spans 23–91 (NRTYTRIGQL…KGSGVYVVRT (69 aa)). A DNA-binding region (H-T-H motif) is located at residues 51-70 (EREISEKFGVSRTIVREAMV).

Its function is as follows. Repressor for the uxuRBA operon. This chain is Uxu operon regulator (uxuR), found in Haemophilus influenzae (strain ATCC 51907 / DSM 11121 / KW20 / Rd).